The sequence spans 446 residues: Exodeoxyribonuclease 7 large subunit (446 aa).

It belongs to the XseA family. As to quaternary structure, heterooligomer composed of large and small subunits.

It is found in the cytoplasm. The catalysed reaction is Exonucleolytic cleavage in either 5'- to 3'- or 3'- to 5'-direction to yield nucleoside 5'-phosphates.. Its function is as follows. Bidirectionally degrades single-stranded DNA into large acid-insoluble oligonucleotides, which are then degraded further into small acid-soluble oligonucleotides. The polypeptide is Exodeoxyribonuclease 7 large subunit (Vibrio cholerae serotype O1 (strain ATCC 39315 / El Tor Inaba N16961)).